A 218-amino-acid polypeptide reads, in one-letter code: MSEVALPAPAASTSPEKPSAGKKAKKPAKAAAAAKKKPAGPSVSELIVQAVSSSKERSGVSLAALKKALAAAGYDVEKNNSRIKLGLKSLVGKGTLVQTKGTGASGSFKLNKKVASVDAKPTATKVATKTKVTSASKKPKKASGAAAAKKSVKTPKKARKSVLTKKSSKSPKKPKAVKPKKVAKSPAKAKAVKPKGAKVKVTKPKTAAKPKKAAPKKK.

A disordered region spans residues 1-42 (MSEVALPAPAASTSPEKPSAGKKAKKPAKAAAAAKKKPAGPS). Residue Ser-2 is modified to N-acetylserine. Phosphoserine occurs at positions 2 and 12. An N6-acetyllysine modification is found at Lys-17. A compositionally biased stretch (basic residues) spans 20 to 38 (AGKKAKKPAKAAAAAKKKP). Lys-37 is subject to N6-(beta-hydroxybutyryl)lysine. The region spanning 39–112 (AGPSVSELIV…GASGSFKLNK (74 aa)) is the H15 domain. The residue at position 44 (Ser-44) is a Phosphoserine. Position 55 is an N6-(beta-hydroxybutyryl)lysine (Lys-55). Arg-57 carries the post-translational modification Citrulline. An N6-(beta-hydroxybutyryl)lysine modification is found at Lys-67. The residue at position 78 (Lys-78) is an N6-acetyllysine. The residue at position 88 (Lys-88) is an N6-(beta-hydroxybutyryl)lysine. Lys-93 is subject to N6-(beta-hydroxybutyryl)lysine; alternate. Lys-93 is subject to N6-acetyllysine; alternate. Ser-107 bears the Phosphoserine; by PKC mark. At Lys-109 the chain carries N6-(beta-hydroxybutyryl)lysine. The segment at 116–218 (SVDAKPTATK…KPKKAAPKKK (103 aa)) is disordered. Positions 119–149 (AKPTATKVATKTKVTSASKKPKKASGAAAAK) are enriched in low complexity. Lys-125 carries the N6-acetyllysine modification. Composition is skewed to basic residues over residues 150–183 (KSVKTPKKARKSVLTKKSSKSPKKPKAVKPKKVA) and 190–218 (KAVKPKGAKVKVTKPKTAAKPKKAAPKKK). Thr-206 is modified (phosphothreonine).

It belongs to the histone H1/H5 family. In terms of assembly, interacts with DFFB. Post-translationally, H1 histones are progressively phosphorylated during the cell cycle, becoming maximally phosphorylated during late G2 phase and M phase, and being dephosphorylated sharply thereafter. Citrullination at Arg-57 (H1R54ci) by PADI4 takes place within the DNA-binding site of H1 and results in its displacement from chromatin and global chromatin decondensation, thereby promoting pluripotency and stem cell maintenance.

It localises to the nucleus. The protein localises to the chromosome. Its function is as follows. H1 histones bind to linker DNA between nucleosomes forming the macromolecular structure known as the chromatin fiber. H1 histones are necessary for the condensation of nucleosome chains into higher-order structured fibers. Also acts as a regulator of individual gene transcription through chromatin remodeling. In Bos taurus (Bovine), this protein is Histone H1.1.